Here is a 235-residue protein sequence, read N- to C-terminus: Small ribosomal subunit protein uS2 (235 aa).

The protein belongs to the universal ribosomal protein uS2 family.

The polypeptide is Small ribosomal subunit protein uS2 (Caldanaerobacter subterraneus subsp. tengcongensis (strain DSM 15242 / JCM 11007 / NBRC 100824 / MB4) (Thermoanaerobacter tengcongensis)).